The primary structure comprises 240 residues: Large ribosomal subunit protein bL25 (240 aa).

2 disordered regions span residues 1–20 (MAENVLSAQKRTEQGKGPAR) and 220–240 (PAAGAAPAKGGEAKGGDKGKK). A compositionally biased stretch (low complexity) spans 220 to 229 (PAAGAAPAKG). Positions 230–240 (GEAKGGDKGKK) are enriched in basic and acidic residues.

This sequence belongs to the bacterial ribosomal protein bL25 family. CTC subfamily. As to quaternary structure, part of the 50S ribosomal subunit; part of the 5S rRNA/L5/L18/L25 subcomplex. Contacts the 5S rRNA. Binds to the 5S rRNA independently of L5 and L18.

Its function is as follows. This is one of the proteins that binds to the 5S RNA in the ribosome where it forms part of the central protuberance. The chain is Large ribosomal subunit protein bL25 from Anaeromyxobacter dehalogenans (strain 2CP-C).